Reading from the N-terminus, the 158-residue chain is 6,7-dimethyl-8-ribityllumazine synthase (158 aa).

Residues Phe23, 61 to 63 (SME), and 85 to 87 (AVI) each bind 5-amino-6-(D-ribitylamino)uracil. 90–91 (DT) is a (2S)-2-hydroxy-3-oxobutyl phosphate binding site. His93 (proton donor) is an active-site residue. Residue Tyr118 participates in 5-amino-6-(D-ribitylamino)uracil binding. Arg132 is a binding site for (2S)-2-hydroxy-3-oxobutyl phosphate.

Belongs to the DMRL synthase family.

It catalyses the reaction (2S)-2-hydroxy-3-oxobutyl phosphate + 5-amino-6-(D-ribitylamino)uracil = 6,7-dimethyl-8-(1-D-ribityl)lumazine + phosphate + 2 H2O + H(+). The protein operates within cofactor biosynthesis; riboflavin biosynthesis; riboflavin from 2-hydroxy-3-oxobutyl phosphate and 5-amino-6-(D-ribitylamino)uracil: step 1/2. Catalyzes the formation of 6,7-dimethyl-8-ribityllumazine by condensation of 5-amino-6-(D-ribitylamino)uracil with 3,4-dihydroxy-2-butanone 4-phosphate. This is the penultimate step in the biosynthesis of riboflavin. The protein is 6,7-dimethyl-8-ribityllumazine synthase of Prochlorococcus marinus (strain MIT 9211).